We begin with the raw amino-acid sequence, 389 residues long: Type 2 DNA topoisomerase 6 subunit A (389 aa).

Residues 13–161 enclose the Topo IIA-type catalytic domain; it reads KARLRAAEVM…MLILSKEKGK (149 aa). Y107 acts as the O-(5'-phospho-DNA)-tyrosine intermediate in catalysis. E208 and D260 together coordinate Mg(2+).

Belongs to the TOP6A family. In terms of assembly, homodimer. Heterotetramer of two Top6A and two Top6B chains. The cofactor is Mg(2+).

The catalysed reaction is ATP-dependent breakage, passage and rejoining of double-stranded DNA.. Relaxes both positive and negative superturns and exhibits a strong decatenase activity. This Aeropyrum pernix (strain ATCC 700893 / DSM 11879 / JCM 9820 / NBRC 100138 / K1) protein is Type 2 DNA topoisomerase 6 subunit A.